The primary structure comprises 198 residues: Ribonuclease HII (198 aa).

The 189-residue stretch at 10–198 (QLVAGVDEVG…PVKRALGLAS (189 aa)) folds into the RNase H type-2 domain. 3 residues coordinate a divalent metal cation: Asp16, Glu17, and Asp108.

The protein belongs to the RNase HII family. The cofactor is Mn(2+). Mg(2+) serves as cofactor.

The protein resides in the cytoplasm. It catalyses the reaction Endonucleolytic cleavage to 5'-phosphomonoester.. In terms of biological role, endonuclease that specifically degrades the RNA of RNA-DNA hybrids. The chain is Ribonuclease HII from Escherichia fergusonii (strain ATCC 35469 / DSM 13698 / CCUG 18766 / IAM 14443 / JCM 21226 / LMG 7866 / NBRC 102419 / NCTC 12128 / CDC 0568-73).